The chain runs to 424 residues: Serine--tRNA ligase (424 aa).

231–233 (TAE) contacts L-serine. An ATP-binding site is contributed by 262–264 (RSE). Glutamate 285 contributes to the L-serine binding site. 349–352 (EISS) provides a ligand contact to ATP. Serine 385 lines the L-serine pocket.

This sequence belongs to the class-II aminoacyl-tRNA synthetase family. Type-1 seryl-tRNA synthetase subfamily. Homodimer. The tRNA molecule binds across the dimer.

It is found in the cytoplasm. It carries out the reaction tRNA(Ser) + L-serine + ATP = L-seryl-tRNA(Ser) + AMP + diphosphate + H(+). The catalysed reaction is tRNA(Sec) + L-serine + ATP = L-seryl-tRNA(Sec) + AMP + diphosphate + H(+). It functions in the pathway aminoacyl-tRNA biosynthesis; selenocysteinyl-tRNA(Sec) biosynthesis; L-seryl-tRNA(Sec) from L-serine and tRNA(Sec): step 1/1. Catalyzes the attachment of serine to tRNA(Ser). Is also able to aminoacylate tRNA(Sec) with serine, to form the misacylated tRNA L-seryl-tRNA(Sec), which will be further converted into selenocysteinyl-tRNA(Sec). This is Serine--tRNA ligase from Bacillus cereus (strain AH187).